The sequence spans 363 residues: LIM and cysteine-rich domains protein 1 (363 aa).

Phosphoserine is present on Ser-16. In terms of domain architecture, PET spans 99–206 (MIMTNPIATG…GEVALPGQGG (108 aa)). Residues 200-234 (ALPGQGGLPKEEGKQQEKPEGAETAPPTTNGSIGD) form a disordered region. Positions 208 to 220 (PKEEGKQQEKPEG) are enriched in basic and acidic residues. LIM zinc-binding domains are found at residues 239–304 (YVCE…SLRP) and 305–363 (RCSG…SKRS).

As to quaternary structure, interacts with beta-dystroglycan. Interacts with GATA1, GATA4 and GATA6.

It is found in the cytoplasm. Its subcellular location is the nucleus. In terms of biological role, transcriptional cofactor that restricts GATA6 function by inhibiting DNA-binding, resulting in repression of GATA6 transcriptional activation of downstream target genes. Represses GATA6-mediated trans activation of lung- and cardiac tissue-specific promoters. Inhibits DNA-binding by GATA4 and GATA1 to the cTNC promoter. Plays a critical role in the development of cardiac hypertrophy via activation of calcineurin/nuclear factor of activated T-cells signaling pathway. The chain is LIM and cysteine-rich domains protein 1 (LMCD1) from Bos taurus (Bovine).